Reading from the N-terminus, the 298-residue chain is ADP-ribosyl cyclase/cyclic ADP-ribose hydrolase 1 (298 aa).

Residues 1–21 (MPDYEFSPASGDRPRSWISKQ) are Cytoplasmic-facing. Residues 22-42 (VLIVLGVCLPVILALAIWVGV) traverse the membrane as a helical; Signal-anchor for type II membrane protein segment. Over 43–298 (LTWRQSSMGA…PEHPSCSVLM (256 aa)) the chain is Extracellular. 3 disulfide bridges follow: C64–C80, C97–C178, and C158–C171. N-linked (GlcNAc...) asparagine glycosylation is present at N98. Residue C117 is part of the active site. N-linked (GlcNAc...) asparagine glycosylation is present at N118. An N-linked (GlcNAc...) asparagine glycan is attached at N177. C199 is an active-site residue. Residues N207 and N268 are each glycosylated (N-linked (GlcNAc...) asparagine). 2 cysteine pairs are disulfide-bonded: C252/C273 and C285/C294.

Belongs to the ADP-ribosyl cyclase family. Homodimer. Osteoclasts.

It localises to the cell membrane. The protein resides in the microsome membrane. The protein localises to the endoplasmic reticulum membrane. It catalyses the reaction NAD(+) = cyclic ADP-beta-D-ribose + nicotinamide + H(+). The enzyme catalyses 2'-phospho-cyclic ADP-ribose + nicotinate = nicotinate-adenine dinucleotide phosphate. The catalysed reaction is NAD(+) + H2O = ADP-D-ribose + nicotinamide + H(+). It carries out the reaction nicotinate + NADP(+) = nicotinate-adenine dinucleotide phosphate + nicotinamide. Functionally, synthesizes cyclic ADP-ribose (cADPR), a second messenger for glucose-induced insulin secretion. Synthesizes the Ca(2+) mobilizer nicotinate-adenine dinucleotide phosphate, NAADP(+), from 2'-phospho-cADPR and nicotinic acid, as well as from NADP(+) and nicotinic acid. Also has cADPR hydrolase activity. This Oryctolagus cuniculus (Rabbit) protein is ADP-ribosyl cyclase/cyclic ADP-ribose hydrolase 1 (CD38).